A 690-amino-acid chain; its full sequence is Eukaryotic translation initiation factor 3 subunit B (690 aa).

The segment covering 1–11 has biased composition (basic and acidic residues); the sequence is MAKKKSEDHSG. The tract at residues 1 to 37 is disordered; sequence MAKKKSEDHSGGDANDSDYNEEPNFEDPPNFVDNISD. A compositionally biased stretch (acidic residues) spans 15–25; sequence NDSDYNEEPNF. The region spanning 57–141 is the RRM domain; sequence SVVVVDNIPK…HTFAVNLFTD (85 aa). WD repeat units follow at residues 207-246, 247-289, 293-331, 334-369, 442-484, and 530-575; these read TRER…KIQK, FPHT…EKRS, DGMS…LLDL, IKIP…TLME, EIRE…KPSL, and PDHF…IKRT. Residues 614-645 adopt a coiled-coil conformation; the sequence is QKDRLRLTRASKELLEKRSQLRETFMEYRNKR.

The protein belongs to the eIF-3 subunit B family. In terms of assembly, component of the eukaryotic translation initiation factor 3 (eIF-3) complex. The eIF-3 complex interacts with pix. Interacts with mxt.

Its subcellular location is the cytoplasm. RNA-binding component of the eukaryotic translation initiation factor 3 (eIF-3) complex, which is involved in protein synthesis of a specialized repertoire of mRNAs and, together with other initiation factors, stimulates binding of mRNA and methionyl-tRNAi to the 40S ribosome. The eIF-3 complex specifically targets and initiates translation of a subset of mRNAs involved in cell proliferation. The sequence is that of Eukaryotic translation initiation factor 3 subunit B from Drosophila pseudoobscura pseudoobscura (Fruit fly).